We begin with the raw amino-acid sequence, 1058 residues long: SIT4-associating protein SAP185 (1058 aa).

Residue lysine 20 forms a Glycyl lysine isopeptide (Lys-Gly) (interchain with G-Cter in ubiquitin) linkage. Disordered regions lie at residues 34–71 (TSTE…NREE), 135–202 (SEDR…ELEE), 513–556 (NSQN…TSID), 818–862 (CQEE…DQEQ), 873–892 (TKTR…VPGE), and 934–992 (ELSD…HDYD). Positions 42 to 55 (DSNSTDESLESNSF) are enriched in polar residues. Basic and acidic residues-rich tracts occupy residues 135-146 (SEDRDLVRGEDK) and 153-175 (ENAK…TRSG). The segment covering 176 to 189 (EEEELENEENDSAS) has biased composition (acidic residues). The span at 190 to 202 (EDTRVTLPHELEE) shows a compositional bias: basic and acidic residues. Acidic residues-rich tracts occupy residues 528-546 (ENED…DDTN) and 820-837 (EEEE…EDEP). Basic and acidic residues predominate over residues 838 to 861 (QEYRNGDSVRSKESNSSEGKRDQE). The segment covering 934–963 (ELSDGWESSPSNSIPKRASPSKNGMNSPMF) has biased composition (polar residues). The segment covering 967–991 (FELHSPTDEFGGHKDEILSAEGHDY) has biased composition (basic and acidic residues).

The protein belongs to the SAPS family. Hyperphosphorylated in the absence of SIT4.

Functionally, associates with the SIT4 phosphatase in a cell cycle dependent manner. May be directly or indirectly involved in SIT4-dependent functions in budding and in normal G1 cyclin expression. The polypeptide is SIT4-associating protein SAP185 (SAP185) (Saccharomyces cerevisiae (strain ATCC 204508 / S288c) (Baker's yeast)).